Here is a 412-residue protein sequence, read N- to C-terminus: MEFNSEFLATLCARGYLHQLTDATALDGIMSSGAVTAYIGFDCTANSLHIGSLMQIMLLRYLQRFGHKPIVLLGGATTKVGDPSGKEKTRAMLSEDNISANKEGILRVIKKFLSEDVVVVDNAEWLGNYGYLDFLREIGSKFSVNVMLGLESVKSRLSRDQQLSFLEFSYVLLQSYDFVELHKRYGCILQIGGSDQWGNIVSGIDLARKMGCPQLYGVTTPLLLNSSGAKMGKTADGAIWLDETLYSPYNYWQYFRNVPDQDVGRLLRLFTELPLSEIERLEALKGEELNEAKKILATAVTSICHGAEVALQVENQALKVFEHNDHDELRSITFSRKTLGQGIPISKLLHMWGLEESISAGRRLIRGGGCKINGGVVLDEEKLLNCGDFDDNGGYVAVFCGKKRRLKVVLED.

Residue Tyr-38 coordinates L-tyrosine. Residues 43-52 carry the 'HIGH' region motif; that stretch reads CTANSLHIGS. L-tyrosine contacts are provided by Tyr-170 and Gln-174. The short motif at 230–234 is the 'KMSKS' region element; that stretch reads KMGKT. Lys-233 lines the ATP pocket. Residues 343–409 form the S4 RNA-binding domain; the sequence is IPISKLLHMW…CGKKRRLKVV (67 aa).

The protein belongs to the class-I aminoacyl-tRNA synthetase family. TyrS type 1 subfamily. As to quaternary structure, homodimer.

It is found in the cytoplasm. The enzyme catalyses tRNA(Tyr) + L-tyrosine + ATP = L-tyrosyl-tRNA(Tyr) + AMP + diphosphate + H(+). In terms of biological role, catalyzes the attachment of tyrosine to tRNA(Tyr) in a two-step reaction: tyrosine is first activated by ATP to form Tyr-AMP and then transferred to the acceptor end of tRNA(Tyr). This Anaplasma phagocytophilum (strain HZ) protein is Tyrosine--tRNA ligase.